A 230-amino-acid polypeptide reads, in one-letter code: Uracil-DNA glycosylase (230 aa).

Catalysis depends on D70, which acts as the Proton acceptor.

It belongs to the uracil-DNA glycosylase (UDG) superfamily. UNG family.

Its subcellular location is the cytoplasm. It catalyses the reaction Hydrolyzes single-stranded DNA or mismatched double-stranded DNA and polynucleotides, releasing free uracil.. Functionally, excises uracil residues from the DNA which can arise as a result of misincorporation of dUMP residues by DNA polymerase or due to deamination of cytosine. The protein is Uracil-DNA glycosylase of Pseudomonas putida (strain GB-1).